A 376-amino-acid polypeptide reads, in one-letter code: N-acetyldiaminopimelate deacetylase (376 aa).

Aspartate 69 is a catalytic residue. Glutamate 128 serves as the catalytic Proton acceptor.

The protein belongs to the peptidase M20A family. N-acetyldiaminopimelate deacetylase subfamily.

The catalysed reaction is N-acetyl-(2S,6S)-2,6-diaminopimelate + H2O = (2S,6S)-2,6-diaminopimelate + acetate. Its pathway is amino-acid biosynthesis; L-lysine biosynthesis via DAP pathway; LL-2,6-diaminopimelate from (S)-tetrahydrodipicolinate (acetylase route): step 3/3. Functionally, catalyzes the conversion of N-acetyl-diaminopimelate to diaminopimelate and acetate. This is N-acetyldiaminopimelate deacetylase from Streptococcus pneumoniae (strain P1031).